The chain runs to 1171 residues: MEIEPPQAVEVVDPEVRSYVYSLVTALGGTAGNETGRYVLGDDALGCLRDLKKWLRFYDEKLNRMDVARCLAECKLLNGDLVPIISLYGDAEQSDKHKARIMLACLELLVPLTWPVEVHGQMTFNHHRHTPYLQYSQVEYKRGILGFAPSPILRALIRVGLPSMAIPRSERSTRDEGIIRLMLYFFRNIAVISSPPNLPIDSDDDKATRSATINAFQQQDVFALLLTMCSNMGNDFTFQDVIILEILFNLVKGVDVDQLFKLNERAGTIKTDDLQDILQKEDELNREHSKNAPTRHGRFGTMIWVKRDDEKLSTVSGQDVLKGDRATFLKMDKTKKWNKPKFKREVVDPSSNNFNLKVRLTSSATKHLRTFVEEFLDSGFNPLFTHLRKAIEREADRVTESTSRQFWYAVSWFLHAERARREHQKETRQRSKGTSREIEPDSFSLVASVLNQETFVGLNRFMQHSIDFKDWQDLTAGMKCLTQILLTVQEMAISPLEEDQEIAENIQSRIFYEETTHDRVLSILRNYKDQGFWYLDACTELAHVFLRMLEQYSKQNVDMQVRSRRRARRKQAQAAVPNQNETEAGGEHDSDTEDIAEAHQTVTERSFDFKRFSVRFCTQKSVDTFVALTKYYRELDSEQLKRAHRFFYRVAFKQDMSVLLFRVDIISLLFKMIKGPEGLDPSKPPFKDWEELIRQIFKKLVRKLGERPELVVELLFSKINATVFYLEYGHEKQTMSESRPATELELKPGSASTLDEKIRIVVSALIQEDKKPLVKWLSQVLGSAASERLSWEMEAEARATSSPQEQSDRSKAPSIAVLPEDDGCRTAMFRNARLRLLMRLAGLERLDEDVLGASWMIPSSVPSSNLKEYHELIEKHCESPAEDIDGVDPRDLMRRKRTAADTDSSRHEFTENVNFGSDSEGEDDGVLFPPNLPERSKALKTLKQRRRRRRRSDDAEESGPDEAVLEARRTAREKNALERQRKIKSDLYVHASDDESDEEADIEFFAKEEMRRQAQARRVAEALETGMPENNTTKKKSKASAGRKRKVKPVLELDDDDSEASPPKRRRSDEVIESDSDGELMVGIGSTSPRRSQTPPTSADNIFGSEKSPSPMFPWSVGVDQMMAKLQGKDEASADNGESNEDEGEDVLSGTGRTRRRRTMGGFVIGSDSDS.

2 disordered regions span residues 568–592 (RRKQ…DSDT) and 880–1171 (PAED…DSDS). A compositionally biased stretch (basic and acidic residues) spans 887-910 (VDPRDLMRRKRTAADTDSSRHEFT). Over residues 938–950 (ALKTLKQRRRRRR) the composition is skewed to basic residues. A compositionally biased stretch (acidic residues) spans 954 to 964 (DAEESGPDEAV). Residues 965–993 (LEARRTAREKNALERQRKIKSDLYVHASD) are compositionally biased toward basic and acidic residues. Positions 1033-1048 (TKKKSKASAGRKRKVK) are enriched in basic residues. A compositionally biased stretch (polar residues) spans 1085–1100 (GSTSPRRSQTPPTSAD).

This sequence belongs to the timeless family. In terms of assembly, component of the fork protection complex (FPC) consisting of TOF1 and CSM3.

Its subcellular location is the nucleus. Forms a fork protection complex (FPC) with CSM3 and which is required for chromosome segregation during meiosis and DNA damage repair. FPC coordinates leading and lagging strand synthesis and moves with the replication fork. FPC stabilizes replication forks in a configuration that is recognized by replication checkpoint sensors. This chain is Topoisomerase 1-associated factor 1 (TOF1), found in Coccidioides immitis (strain RS) (Valley fever fungus).